The following is an 87-amino-acid chain: Small ribosomal subunit protein uS15c (87 aa).

Belongs to the universal ribosomal protein uS15 family. In terms of assembly, part of the 30S ribosomal subunit.

The protein localises to the plastid. It is found in the chloroplast. The chain is Small ribosomal subunit protein uS15c (rps15) from Solanum tuberosum (Potato).